A 695-amino-acid polypeptide reads, in one-letter code: DNA topoisomerase 4 subunit B (695 aa).

The segment at 1 to 53 (MSSSDKIPSLFGDDDALAPVPAAPFKASVEPRVEPTPRPIPPPPPSKTASAPG) is disordered. The span at 36–46 (TPRPIPPPPPS) shows a compositional bias: pro residues. Residues Y55, N95, D122, 164–170 (GLHGVGA), and K397 each bind ATP. The Toprim domain maps to 477–591 (AELFIVEGDS…GGHLFLALPP (115 aa)). Mg(2+)-binding residues include E483, D556, and D558.

It belongs to the type II topoisomerase family. ParE type 1 subfamily. As to quaternary structure, heterotetramer composed of ParC and ParE. The cofactor is Mg(2+). Mn(2+) serves as cofactor. Requires Ca(2+) as cofactor.

The enzyme catalyses ATP-dependent breakage, passage and rejoining of double-stranded DNA.. Functionally, topoisomerase IV is essential for chromosome segregation. It relaxes supercoiled DNA. Performs the decatenation events required during the replication of a circular DNA molecule. This chain is DNA topoisomerase 4 subunit B, found in Caulobacter vibrioides (strain ATCC 19089 / CIP 103742 / CB 15) (Caulobacter crescentus).